A 246-amino-acid chain; its full sequence is tRNA pseudouridine synthase A (246 aa).

The Nucleophile role is filled by Asp-52. Tyr-111 serves as a coordination point for substrate.

This sequence belongs to the tRNA pseudouridine synthase TruA family. Homodimer.

It carries out the reaction uridine(38/39/40) in tRNA = pseudouridine(38/39/40) in tRNA. Formation of pseudouridine at positions 38, 39 and 40 in the anticodon stem and loop of transfer RNAs. The polypeptide is tRNA pseudouridine synthase A (Borreliella burgdorferi (strain ATCC 35210 / DSM 4680 / CIP 102532 / B31) (Borrelia burgdorferi)).